The following is a 623-amino-acid chain: MSSRSGSADTFTQRSDSNLRPRRLISLDDVRDNNGRQPSSSGISTTGSSELPTLRSRGATPSPRPSRNVSPIPMGHPSRATQPRSDARPGNSLGGFTPNGKYQDPFTESSRAAVDFLDASWSSLQGIASSLLGSDTARPTSNGGPRSHARKPSRPDYLAKHRAVSTSTWGPSGPTTPEIGAGTQDERQAMVHAKKMEALLLADTDPSWNLNSRHKRRDSNDRTVQSRADTDQDEEALVYVHQVQPTDTITGVTIRYGCQAAIFRKVNGFWPSDSIQARKTVLLPVDCCSIKGRPVKAREETDLLQDVPSRPSIEDPSGSSIVPAPSPEKSTFSRISEQPGTEPEAESDQIWKHESWVQIDGFAEPVEIGRVPRRALGFFPRTRRKSVSYSDSEPVRGRLQTPTISTASSPIQPSSSPNADQHDSYHAGSPASRGPGSKPKGRHRRRPSGLELSGTGVGTLDRNVNLPGPAMDGLSKFFAQHLPTLAPKQAPPNFDSLSGNSSTVASINSTSLDSIGGAVEGWVRKITARAKSSINDLQQGTSSSQNQAMPPETRRRGFSDLIELEDGVESRNSSGLLAGTGWKPDLTRSGSGYVNGANLRERFPSASPSTSRTRTGLDRTKGD.

A compositionally biased stretch (polar residues) spans 1-18; it reads MSSRSGSADTFTQRSDSN. Disordered stretches follow at residues 1 to 107, 132 to 181, 207 to 231, 298 to 349, 384 to 464, 533 to 553, and 568 to 623; these read MSSR…DPFT, LGSD…EIGA, SWNL…ADTD, REET…ESDQ, RKSV…DRNV, SIND…PPET, and VESR…TKGD. The span at 25 to 34 shows a compositional bias: basic and acidic residues; the sequence is ISLDDVRDNN. Residues 39 to 49 show a composition bias toward low complexity; it reads SSSGISTTGSS. A compositionally biased stretch (polar residues) spans 132–144; that stretch reads LGSDTARPTSNGG. Residues 165-177 show a composition bias toward low complexity; the sequence is STSTWGPSGPTTP. The span at 328–339 shows a compositional bias: polar residues; it reads EKSTFSRISEQP. A compositionally biased stretch (low complexity) spans 400 to 417; that stretch reads QTPTISTASSPIQPSSSP. Residues 533–548 are compositionally biased toward polar residues; sequence SINDLQQGTSSSQNQA. Over residues 604-614 the composition is skewed to low complexity; sequence PSASPSTSRTR.

This is an uncharacterized protein from Emericella nidulans (strain FGSC A4 / ATCC 38163 / CBS 112.46 / NRRL 194 / M139) (Aspergillus nidulans).